An 86-amino-acid chain; its full sequence is Toxin Tpa5 (86 aa).

The first 20 residues, 1 to 20, serve as a signal peptide directing secretion; sequence MSIFPIALALLLIGLEEGEA. The 64-residue stretch at 22-85 folds into the LCN-type CS-alpha/beta domain; sequence RDGYPISKNN…WGDPGTPPCM (64 aa). Cystine bridges form between Cys33-Cys84, Cys37-Cys58, Cys43-Cys64, and Cys47-Cys66.

The protein belongs to the long (4 C-C) scorpion toxin superfamily. Sodium channel inhibitor family. Beta subfamily. In terms of tissue distribution, expressed by the venom gland.

The protein resides in the secreted. Beta toxins bind voltage-independently at site-4 of sodium channels (Nav) and shift the voltage of activation toward more negative potentials thereby affecting sodium channel activation and promoting spontaneous and repetitive firing. The polypeptide is Toxin Tpa5 (Tityus pachyurus (Colombian scorpion)).